The chain runs to 147 residues: Sulfur acceptor protein CsdE (147 aa).

Cys61 serves as the catalytic Cysteine persulfide intermediate. At Cys61 the chain carries Cysteine persulfide.

Belongs to the SufE family. As to quaternary structure, homodimer. Forms a heterodimer with CsdA. Interacts with CsdA and with TcdA/CsdL.

Its function is as follows. Stimulates the cysteine desulfurase activity of CsdA. Contains a cysteine residue (Cys-61) that acts to accept sulfur liberated via the desulfurase activity of CsdA. May be able to transfer sulfur to TcdA/CsdL. Seems to support the function of TcdA in the generation of cyclic threonylcarbamoyladenosine at position 37 (ct(6)A37) in tRNAs that read codons beginning with adenine. Does not appear to participate in Fe/S biogenesis. This is Sulfur acceptor protein CsdE (csdE) from Escherichia coli (strain K12).